Reading from the N-terminus, the 546-residue chain is (-)-5-epieremophilene synthase STPS1 (546 aa).

Mg(2+) contacts are provided by Asp299, Asp303, Asp442, Thr446, and Glu450. A DDXXD motif motif is present at residues 299–303 (DDTYD).

This sequence belongs to the terpene synthase family. Tpsa subfamily. Monomer. Requires Mg(2+) as cofactor. In terms of tissue distribution, highly expressed in leaves and at lower levels in flowers.

It catalyses the reaction (2E,6E)-farnesyl diphosphate = (-)-5-epi-eremophilene + diphosphate. It participates in secondary metabolite biosynthesis; terpenoid biosynthesis. In terms of biological role, sesquiterpene synthase that catalyzes the conversion of farnesyl diphosphate to (-)-5-epi-eremophilene. The chain is (-)-5-epieremophilene synthase STPS1 from Salvia miltiorrhiza (Chinese sage).